Consider the following 130-residue polypeptide: Small ribosomal subunit protein uS11 (130 aa).

It belongs to the universal ribosomal protein uS11 family. As to quaternary structure, part of the 30S ribosomal subunit.

In terms of biological role, located on the platform of the 30S subunit. In Ignicoccus hospitalis (strain KIN4/I / DSM 18386 / JCM 14125), this protein is Small ribosomal subunit protein uS11.